Consider the following 437-residue polypeptide: Enolase (437 aa).

(2R)-2-phosphoglycerate is bound at residue glutamine 162. Catalysis depends on glutamate 204, which acts as the Proton donor. Mg(2+) contacts are provided by aspartate 251, glutamate 297, and aspartate 324. (2R)-2-phosphoglycerate-binding residues include lysine 349, arginine 378, serine 379, and lysine 400. The active-site Proton acceptor is the lysine 349.

The protein belongs to the enolase family. It depends on Mg(2+) as a cofactor.

The protein localises to the cytoplasm. The protein resides in the secreted. It localises to the cell surface. It catalyses the reaction (2R)-2-phosphoglycerate = phosphoenolpyruvate + H2O. It functions in the pathway carbohydrate degradation; glycolysis; pyruvate from D-glyceraldehyde 3-phosphate: step 4/5. Functionally, catalyzes the reversible conversion of 2-phosphoglycerate (2-PG) into phosphoenolpyruvate (PEP). It is essential for the degradation of carbohydrates via glycolysis. The chain is Enolase from Pelodictyon phaeoclathratiforme (strain DSM 5477 / BU-1).